An 841-amino-acid chain; its full sequence is SLIT and NTRK-like protein 6 (841 aa).

The first 26 residues, 1–26, serve as a signal peptide directing secretion; it reads MKLWIHLFYSSLLACISLHSQTPVLS. Residues 27–67 enclose the LRRNT 1 domain; it reads SRGSCDSLCNCEEKDGTMLINCEAKGIKMVSEISVPPSRPF. The Extracellular segment spans residues 27–608; sequence SRGSCDSLCN…RSLTDAVPLS (582 aa). LRR repeat units lie at residues 89-110, 113-134, 137-158, 161-182, and 184-205; these read NAISIHLGFNNIADIEIGAFNG, LLKQLHINHNSLEILKEDTFHG, NLEFLQADNNFITVIEPSAFSK, RLKVLILNDNAIESLPPNIFRF, and PLTHLDLRGNQLQTLPYVGFLE. The 52-residue stretch at 218 to 269 folds into the LRRCT 1 domain; it reads NKWACNCDLLQLKTWLENMPPQSIIGDVVCNSPPFFKGSILSRLKKESICPT. The LRRNT 2 domain occupies 320–361; sequence PSTQLPGPYCPIPCNCKVLSPSGLLIHCQERNIESLSDLRPP. 6 LRR repeats span residues 364–385, 388–409, 412–433, 436–457, 460–481, and 483–504; these read NPRKLILAGNIIHSLMKSDLVE, TLEMLHLGNNRIEVLEEGSFMN, RLQKLYLNGNHLTKLSKGMFLG, NLEYLYLEYNAIKEILPGTFNP, KLKVLYLNNNLLQVLPPHIFSG, and PLTKVNLKTNQFTHLPVSNILD. In terms of domain architecture, LRRCT 2 spans 517–568; it reads NPWDCSCDLVGLQQWIQKLSKNTVTDDILCTSPGHLDKKELKALNSEILCPG. The chain crosses the membrane as a helical span at residues 609–629; sequence VLILGLLIMFITIVFCAAGIV. The Cytoplasmic portion of the chain corresponds to 630-841; that stretch reads VLVLHRRRRY…DYLEVLEQQT (212 aa).

The protein belongs to the SLITRK family. In adult brain, highly expressed in putamen with no expression in cerebral cortex. Expressed in adult and fetal lung and fetal liver. Also expressed at high levels in some brain tumors including medulloblastomas and primitive neuroectodermal tumors.

The protein localises to the cell membrane. Functionally, regulator of neurite outgrowth required for normal hearing and vision. This is SLIT and NTRK-like protein 6 (SLITRK6) from Homo sapiens (Human).